A 616-amino-acid chain; its full sequence is MALLQISEPGLSAAPHQRRLAAGIDLGTTNSLVATVRSGQAETLPDHQGRYLLPSVVNYHASGLTVGYEARLNAAQDPVNTISSVKRMMGRSLADIQTRYPHLPYQLQASENGLPMIQTAGGLLNPVRVSADILKALAARATEALAGDLDGVVITVPAYFDDAQRQGTKDAARLAGLHVLRLLNEPTAAAIAYGLDSGQEGVIAVYDLGGGTFDISILRLSRGVFEVLATGGDSALGGDDFDHLLADYLREQAGLSDRSDNRLQRELLDAAIAAKIALSDADVAHVEVGGWQGDITRSQFNDLIAPLVKRTLMACRRALKDAGVEAQEVLEVVMVGGSTRVPLVRERVGEFFGRTPLTSIDPDKVVAIGAAIQADILVGNKPDSELLLLDVIPLSLGLETMGGLVEKVIPRNTTIPVARAQEFTTFKDGQTAMSIHVMQGERELVQDCRSLARFALRGIPALPAGGAHIRVTFQVDADGLLSVTAMEKSTGVEASIQVKPSYGLTDGEIANMIKDSMSYAEQDIQARMLAEQKVEAARVLESLESALAADAALLSAAERQVIDAAAEQVRAAAAGEDADAIKEAIKNIDTQTQEFAARRMDQSVRAALKGQSVDEV.

The protein belongs to the heat shock protein 70 family.

Chaperone involved in the maturation of iron-sulfur cluster-containing proteins. Has a low intrinsic ATPase activity which is markedly stimulated by HscB. Involved in the maturation of IscU. This Klebsiella pneumoniae (strain 342) protein is Chaperone protein HscA.